Reading from the N-terminus, the 833-residue chain is Transmembrane protease serine 7 (833 aa).

At 1–62 (MDKEKSDPSC…RAPFWNVQNK (62 aa)) the chain is on the cytoplasmic side. A disordered region spans residues 30 to 49 (KLPGRRLPRKPIGKARPRKQ). Positions 32–49 (PGRRLPRKPIGKARPRKQ) are enriched in basic residues. A helical; Signal-anchor for type II membrane protein membrane pass occupies residues 63-83 (IILFTVFLFILAVTAWTLLWL). Residues 84-829 (YISKTDSKDA…NFVPWIHKYV (746 aa)) are Extracellular-facing. In terms of domain architecture, SEA spans 92-220 (DAFYFVGMFR…DSVVLNAGLR (129 aa)). A glycan (N-linked (GlcNAc...) asparagine) is linked at Asn196. 3 disulfide bridges follow: Cys233/Cys259, Cys285/Cys312, and Cys355/Cys386. CUB domains are found at residues 233–350 (CSQY…FEVI) and 355–471 (CENT…YNIS). 2 N-linked (GlcNAc...) asparagine glycosylation sites follow: Asn405 and Asn469. LDL-receptor class A domains lie at 473-509 (PCPA…LFCV) and 548-585 (PCTN…EGCG). Intrachain disulfides connect Cys474–Cys486, Cys481–Cys499, Cys493–Cys508, Cys549–Cys561, Cys556–Cys575, Cys569–Cys584, and Cys621–Cys637. Positions 596–830 (VVGGSDSQEG…FVPWIHKYVP (235 aa)) constitute a Peptidase S1 domain. Catalysis depends on charge relay system residues His636 and Asp684. 3 disulfides stabilise this stretch: Cys720/Cys786, Cys752/Cys765, and Cys776/Cys806. Residue Ser780 is the Charge relay system of the active site.

This sequence belongs to the peptidase S1 family. Forms a heterodimer with SERPINA5. N-glycosylated.

The protein resides in the cell membrane. Functionally, serine protease which preferentially hydrolyzes peptides with Arg at the P1 position. In Rattus norvegicus (Rat), this protein is Transmembrane protease serine 7.